The sequence spans 361 residues: Alanine racemase 2 (361 aa).

K30 functions as the Proton acceptor; specific for D-alanine in the catalytic mechanism. The residue at position 30 (K30) is an N6-(pyridoxal phosphate)lysine. R122 contacts substrate. Y256 functions as the Proton acceptor; specific for L-alanine in the catalytic mechanism. M303 is a substrate binding site.

The protein belongs to the alanine racemase family. Pyridoxal 5'-phosphate is required as a cofactor.

It catalyses the reaction L-alanine = D-alanine. It functions in the pathway amino-acid biosynthesis; D-alanine biosynthesis; D-alanine from L-alanine: step 1/1. Its function is as follows. Catalyzes the interconversion of L-alanine and D-alanine. May also act on other amino acids. In Staphylococcus aureus (strain Mu50 / ATCC 700699), this protein is Alanine racemase 2 (alr2).